The following is a 359-amino-acid chain: UDP-N-acetylglucosamine--N-acetylmuramyl-(pentapeptide) pyrophosphoryl-undecaprenol N-acetylglucosamine transferase (359 aa).

Residues 15-17 (TGG), Asn-127, Arg-166, Ser-191, Ile-245, 264-269 (ALTVSE), and Gln-290 each bind UDP-N-acetyl-alpha-D-glucosamine.

Belongs to the glycosyltransferase 28 family. MurG subfamily.

The protein resides in the cell inner membrane. It catalyses the reaction di-trans,octa-cis-undecaprenyl diphospho-N-acetyl-alpha-D-muramoyl-L-alanyl-D-glutamyl-meso-2,6-diaminopimeloyl-D-alanyl-D-alanine + UDP-N-acetyl-alpha-D-glucosamine = di-trans,octa-cis-undecaprenyl diphospho-[N-acetyl-alpha-D-glucosaminyl-(1-&gt;4)]-N-acetyl-alpha-D-muramoyl-L-alanyl-D-glutamyl-meso-2,6-diaminopimeloyl-D-alanyl-D-alanine + UDP + H(+). It functions in the pathway cell wall biogenesis; peptidoglycan biosynthesis. In terms of biological role, cell wall formation. Catalyzes the transfer of a GlcNAc subunit on undecaprenyl-pyrophosphoryl-MurNAc-pentapeptide (lipid intermediate I) to form undecaprenyl-pyrophosphoryl-MurNAc-(pentapeptide)GlcNAc (lipid intermediate II). The sequence is that of UDP-N-acetylglucosamine--N-acetylmuramyl-(pentapeptide) pyrophosphoryl-undecaprenol N-acetylglucosamine transferase from Pseudomonas putida (strain ATCC 47054 / DSM 6125 / CFBP 8728 / NCIMB 11950 / KT2440).